Reading from the N-terminus, the 498-residue chain is Ulvan-active sulfatase (498 aa).

Positions 1-22 (MNSKKTGVIILGCIAFLHIACS) are cleaved as a signal peptide. D55, D56, C95, D266, and H267 together coordinate Ca(2+). C95 serves as the catalytic Nucleophile. C95 bears the 3-oxoalanine (Cys) mark.

Belongs to the sulfatase family. Requires Ca(2+) as cofactor. Post-translationally, the conversion to 3-oxoalanine (also known as C-formylglycine, FGly), of a serine or cysteine residue in prokaryotes and of a cysteine residue in eukaryotes, is critical for catalytic activity. This post-translational modification is severely defective in multiple sulfatase deficiency (MSD).

Its subcellular location is the periplasm. Its function is as follows. Sulfatase involved in ulvan degradation. Ulvan is the main polysaccharide component of the Ulvales (green seaweed) cell wall. It is composed of disaccharide building blocks comprising 3-sulfated rhamnose (Rha3S) linked to D-glucuronic acid (GlcA), L-iduronic acid (IduA), or D-xylose (Xyl). This Formosa agariphila (strain DSM 15362 / KCTC 12365 / LMG 23005 / KMM 3901 / M-2Alg 35-1) protein is Ulvan-active sulfatase.